Here is a 599-residue protein sequence, read N- to C-terminus: Potassium-transporting ATPase potassium-binding subunit (599 aa).

A run of 12 helical transmembrane segments spans residues 8–28 (LLALYLGALLLAAWPLGIWLA), 61–81 (WQYALALLAFNALGLLAVYAL), 133–153 (ALAVQNFLSAATGIAVVFALF), 176–196 (AWLLLPLSLVFALFLAGNGVI), 280–300 (LTNFFQMLAIFLIPAALCFAF), 311–331 (WAVLAAMTVMFVIAVVAITPA), 366–386 (INASSLFAVITTAASCGAVIA), 391–411 (FTPLGGMVPMVMMQLGEVVFG), 416–436 (GLYGMLIFAILAVFISGLMIG), 456–476 (IAILVTPILVLAGTAVAVLAG), 521–541 (LLGLAMWLGRFGVIVPVLAIA), and 563–583 (LFVLLLIGTVLLVGLLNYVPA).

Belongs to the KdpA family. As to quaternary structure, the system is composed of three essential subunits: KdpA, KdpB and KdpC.

Its subcellular location is the cell inner membrane. Part of the high-affinity ATP-driven potassium transport (or Kdp) system, which catalyzes the hydrolysis of ATP coupled with the electrogenic transport of potassium into the cytoplasm. This subunit binds the periplasmic potassium ions and delivers the ions to the membrane domain of KdpB through an intramembrane tunnel. This Polaromonas naphthalenivorans (strain CJ2) protein is Potassium-transporting ATPase potassium-binding subunit.